Here is an 830-residue protein sequence, read N- to C-terminus: Histone acetyltransferase KAT2A (830 aa).

Positions 1 to 94 (MAEPSQAPNP…RKAQVRGLPR (94 aa)) are disordered. Ala-2 is subject to N-acetylalanine. 2 stretches are compositionally biased toward pro residues: residues 7–33 (APNP…PAPS) and 41–51 (APTPAPAPAPA). The span at 58 to 69 (TGSGGAGVGSGG) shows a compositional bias: gly residues. Basic residues predominate over residues 83-94 (SQRKAQVRGLPR). Ser-302 carries the post-translational modification Phosphoserine. Over residues 398-417 (SFSPSMGGGSNSSLSLDSAG) the composition is skewed to low complexity. The disordered stretch occupies residues 398 to 426 (SFSPSMGGGSNSSLSLDSAGTEPMPAGEK). In terms of domain architecture, N-acetyltransferase spans 496 to 649 (VIGNSLTPKA…GATLMECELN (154 aa)). Lys-542 carries the N6-acetyllysine modification. Glu-568 functions as the Proton donor/acceptor in the catalytic mechanism. Acetyl-CoA-binding positions include 572–574 (CAV), 579–585 (QVKGYGT), and Tyr-610. Succinyl-CoA contacts are provided by residues 572–574 (CAV), 579–585 (QVKGYGT), and Tyr-610. Lys-721 participates in a covalent cross-link: Glycyl lysine isopeptide (Lys-Gly) (interchain with G-Cter in SUMO2). One can recognise a Bromo domain in the interval 721–825 (KDPDQLYTTL…KFFYFKLKEG (105 aa)). At Thr-728 the chain carries Phosphothreonine. Glycyl lysine isopeptide (Lys-Gly) (interchain with G-Cter in SUMO2) cross-links involve residues Lys-752 and Lys-784.

This sequence belongs to the acetyltransferase family. GCN5 subfamily. In terms of assembly, interacts with EP300, CREBBP and ADA2. Component of the TFTC-HAT complex, at least composed of TAF5L, TAF6L, TAF3, TADA3L, SUPT3H/SPT3, TAF2/TAFII150, TAF4/TAFII135, TAF5/TAFII100, KAT2A/GCN5L2, TAF10 and TRRAP. Component of the STAGA transcription coactivator-HAT complex, at least composed of SUPT3H, KAT2A, SUPT7L, TAF5L, TAF6L, TADA3L, TAD1L, TAF10, TAF12, TRRAP and TAF9. The STAGA core complex is associated with a subcomplex required for histone deubiquitination composed of ATXN7L3, ENY2 and USP22. Component of the ADA2A-containing complex (ATAC), composed of KAT14, KAT2A, TADA2L, TADA3L, ZZ3, MBIP, WDR5, YEATS2, CCDC101 and DR1. In the complex, it probably interacts directly with KAT14, MBIP and WDR5. Interacts with PML. Interacts with CEBPB. Interacts with TACC1, TACC2 and TACC3. Interacts with RELA. Interacts with NFATC2. Interacts with TBX5. Interacts with PLK4. Associates with the 2-oxoglutarate dehydrogenase complex. Interacts with XPC; leading to KAT2A recruitment to promoters and subsequent acetylation of histones. Interacts with ERCC3/XPB; leading to KAT2A recruitment to promoters and subsequent acetylation of histones. Interacts with ISL1. Interactions of ISL1 with MLIP1 or KAT2A may be mutually exclusive. Post-translationally, acetylated at Lys-542, inhibiting the protein acetyltransferase activity. Deacetylation at Lys-542 by SIRT6 promotes phosphorylation at Ser-302 and Thr-728 and subsequent activation of the protein acetyltransferase activity, leading to acetylation and inactivation of PPARGC1A. As to expression, in brain, highly expressed in the hippocampal CA1 region (at protein level). Also expressed in the hippocampal subregions CA3 and the dentate gyrus as well as in the cortex and prefrontal cortex. Expressed at low level in the cerebellum.

It localises to the nucleus. The protein localises to the chromosome. Its subcellular location is the cytoplasm. It is found in the cytoskeleton. The protein resides in the microtubule organizing center. It localises to the centrosome. It catalyses the reaction L-lysyl-[histone] + acetyl-CoA = N(6)-acetyl-L-lysyl-[histone] + CoA + H(+). The catalysed reaction is L-lysyl-[protein] + acetyl-CoA = N(6)-acetyl-L-lysyl-[protein] + CoA + H(+). The enzyme catalyses succinyl-CoA + L-lysyl-[protein] = N(6)-succinyl-L-lysyl-[protein] + CoA + H(+). It carries out the reaction glutaryl-CoA + L-lysyl-[protein] = N(6)-glutaryl-L-lysyl-[protein] + CoA + H(+). Protein lysine acyltransferase that can act as a acetyltransferase, glutaryltransferase, succinyltransferase or malonyltransferase, depending on the context. Acts as a histone lysine succinyltransferase: catalyzes succinylation of histone H3 on 'Lys-79' (H3K79succ), with a maximum frequency around the transcription start sites of genes. Succinylation of histones gives a specific tag for epigenetic transcription activation. Association with the 2-oxoglutarate dehydrogenase complex, which provides succinyl-CoA, is required for histone succinylation. In different complexes, functions either as an acetyltransferase (HAT) or as a succinyltransferase: in the SAGA and ATAC complexes, acts as a histone acetyltransferase. Has significant histone acetyltransferase activity with core histones, but not with nucleosome core particles. Has a a strong preference for acetylation of H3 at 'Lys-9' (H3K9ac). Acetylation of histones gives a specific tag for epigenetic transcription activation. Recruited by the XPC complex at promoters, where it specifically mediates acetylation of histone variant H2A.Z.1/H2A.Z, thereby promoting expression of target genes. Involved in long-term memory consolidation and synaptic plasticity: acts by promoting expression of a hippocampal gene expression network linked to neuroactive receptor signaling. Acts as a positive regulator of T-cell activation: upon TCR stimulation, recruited to the IL2 promoter following interaction with NFATC2 and catalyzes acetylation of histone H3 at 'Lys-9' (H3K9ac), leading to promote IL2 expression. Required for growth and differentiation of craniofacial cartilage and bone by regulating acetylation of histone H3 at 'Lys-9' (H3K9ac). Regulates embryonic stem cell (ESC) pluripotency and differentiation. Also acetylates non-histone proteins, such as CEBPB, MRE11, PPARGC1A, PLK4 and TBX5. Involved in heart and limb development by mediating acetylation of TBX5, acetylation regulating nucleocytoplasmic shuttling of TBX5. Acts as a negative regulator of centrosome amplification by mediating acetylation of PLK4. Acts as a negative regulator of gluconeogenesis by mediating acetylation and subsequent inactivation of PPARGC1A. Also acts as a histone glutaryltransferase: catalyzes glutarylation of histone H4 on 'Lys-91' (H4K91glu), a mark that destabilizes nucleosomes by promoting dissociation of the H2A-H2B dimers from nucleosomes. In Mus musculus (Mouse), this protein is Histone acetyltransferase KAT2A.